Reading from the N-terminus, the 400-residue chain is Large envelope protein (400 aa).

The residue at position 1 (Met-1) is an N-acetylmethionine. A lipid anchor (N-myristoyl glycine; by host) is attached at Gly-2. Residues 2–119 (GAPLSTARRG…PPLRDTHPQA (118 aa)) are pre-S1. Residues 2 to 174 (GAPLSTARRG…FSKTGDPAMN (173 aa)) form a pre-S region. Residues 2–181 (GAPLSTARRG…AMNMENITSG (180 aa)) lie on the Virion surface; in external conformation side of the membrane. Residues 2 to 253 (GAPLSTARRG…PGYRWMCLRR (252 aa)) are Intravirion; in internal conformation-facing. N-linked (GlcNAc...) asparagine glycosylation is present at Pro-4. The interval 70-115 (PHGGLLGWSPQAQGILTTSPPDPPPASTNRRSGRKPTPVSPPLRDT) is disordered. Over residues 79–88 (PQAQGILTTS) the composition is skewed to polar residues. Positions 120–174 (MQWNSTQFHQALLDPRVRGLYFPAGGSSSETQNPAPTIASLTSSIFSKTGDPAMN) are pre-S2. A helical membrane pass occupies residues 182 to 202 (LLRPLLVLQAVCFLLTKILTI). The Intravirion; in external conformation portion of the chain corresponds to 203 to 253 (PQSLDSWWTSLNFLGVPPGCPGQNSQSPISNHLPTSCPPTCPGYRWMCLRR). A helical transmembrane segment spans residues 254-274 (FIIFLFILLLCLIFLLVLLDY). The Virion surface segment spans residues 275–348 (QGMLPVCPLL…WASARFSWLS (74 aa)). N-linked (GlcNAc...) asparagine; by host glycosylation is present at Asn-320. The chain crosses the membrane as a helical span at residues 349–369 (LLVQFVQWCVGLSPTVWLLVI). Topologically, residues 370-375 (WMIWYW) are intravirion. The chain crosses the membrane as a helical span at residues 376–398 (GPNLCSILSPFIPLLPIFCYLWA). Over 399–400 (SI) the chain is Virion surface.

Belongs to the orthohepadnavirus major surface antigen family. In terms of assembly, in its internal form (Li-HBsAg), interacts with the capsid protein and with the isoform S. Interacts with host chaperone CANX. As to quaternary structure, associates with host chaperone CANX through its pre-S2 N glycan; this association may be essential for isoform M proper secretion. Interacts with isoform L. Interacts with the antigens of satellite virus HDV (HDVAgs); this interaction is required for encapsidation of HDV genomic RNA. In terms of processing, isoform M is N-terminally acetylated by host at a ratio of 90%, and N-glycosylated by host at the pre-S2 region. Post-translationally, myristoylated.

The protein resides in the virion membrane. In terms of biological role, the large envelope protein exists in two topological conformations, one which is termed 'external' or Le-HBsAg and the other 'internal' or Li-HBsAg. In its external conformation the protein attaches the virus to cell receptors and thereby initiating infection. This interaction determines the species specificity and liver tropism. This attachment induces virion internalization predominantly through caveolin-mediated endocytosis. The large envelope protein also assures fusion between virion membrane and endosomal membrane. In its internal conformation the protein plays a role in virion morphogenesis and mediates the contact with the nucleocapsid like a matrix protein. Functionally, the middle envelope protein plays an important role in the budding of the virion. It is involved in the induction of budding in a nucleocapsid independent way. In this process the majority of envelope proteins bud to form subviral lipoprotein particles of 22 nm of diameter that do not contain a nucleocapsid. The polypeptide is Large envelope protein (Hepatitis B virus genotype H (isolate United States/LAS2523/2002) (HBV-H)).